The sequence spans 455 residues: Gamma-glutamyl phosphate reductase (455 aa).

This sequence belongs to the gamma-glutamyl phosphate reductase family.

Its subcellular location is the cytoplasm. The catalysed reaction is L-glutamate 5-semialdehyde + phosphate + NADP(+) = L-glutamyl 5-phosphate + NADPH + H(+). The protein operates within amino-acid biosynthesis; L-proline biosynthesis; L-glutamate 5-semialdehyde from L-glutamate: step 2/2. Catalyzes the NADPH-dependent reduction of L-glutamate 5-phosphate into L-glutamate 5-semialdehyde and phosphate. The product spontaneously undergoes cyclization to form 1-pyrroline-5-carboxylate. In Synechococcus sp. (strain JA-3-3Ab) (Cyanobacteria bacterium Yellowstone A-Prime), this protein is Gamma-glutamyl phosphate reductase.